Reading from the N-terminus, the 375-residue chain is DNA replication and repair protein RecF (375 aa).

Gly30 to Ser37 provides a ligand contact to ATP.

Belongs to the RecF family.

The protein localises to the cytoplasm. Its function is as follows. The RecF protein is involved in DNA metabolism; it is required for DNA replication and normal SOS inducibility. RecF binds preferentially to single-stranded, linear DNA. It also seems to bind ATP. The protein is DNA replication and repair protein RecF of Hahella chejuensis (strain KCTC 2396).